A 1453-amino-acid chain; its full sequence is MLGRDEDLVRTMSGRGSLGSTSHRSLAGAASKSFRDVFAPPTDDVFGRSDRREEDDVELRWAALERLPTYDRLRKGMLPQTMVNGKIGLEDVDVTNLAPKEKKHLMEMILKFVEEDNEKFLRRLRERTDRVGIEVPKIEVRYENLSVEGDVRSASRALPTLFNVTLNTIESILGLFHLLPSKKRKIEILKDISGIIKPSRMTLLLGPPSSGKTTLLQALAGKLDDTLQMSGRITYCGHEFREFVPQKTCAYISQHDLHFGEMTVRESLDFSGRCLGVGTRYQLLTELSRREREAGIKPDPEIDAFMKSIAISGQETSLVTDYVLKLLGLDICADTLVGDVMRRGISGGQRKRLTTGEMLVGPATALFMDEISTGLDSSTTFQICKFMRQLVHIADVTMVISLLQPAPETFELFDDIILLSEGQIVYQGSRDNVLEFFEYMGFKCPERKGIADFLQEVTSKKDQEQYWNRREHPYSYVSVHDFSSGFNSFHAGQQLASEFRVPYDKAKTHPAALVTQKYGISNKDLFKACFDREWLLMKRNSFVYVFKTVQITIMSLIAMTVYFRTEMHVGTVQDGQKFYGALFFSLINLMFNGMAELAFTVMRLPVFFKQRDFLFYPPWAFALPGFLLKIPLSLIESVIWIALTYYTIGFAPSAARFFRQLLAYFCVNQMALSLFRFLGALGRTEVIANSGGTLALLVVFVLGGFIISKDDIPSWLTWCYYTSPMMYGQTALVINEFLDERWGSPNNDTRINAKTVGEVLLKSRGFFTEPYWFWICIGALLGFTVLFNFCYIIALMYLNPLGNSKATTVVEEGKDKHKGSHSGTGGSVVELTSTSSHGPKKGMVLPFQPLSLAFNNVNYYVDMPAEMKAQGVEGDRLQLLRDVGGAFRPGVLTALVGVSGAGKTTLMDVLAGRKTGGYVEGSINISGYPKNQATFARVSGYCEQNDIHSPHVTVYESLIYSAWLRLSADIDTKTREMFVEEVMELVELKPLRNSIVGLPGVDGLSTEQRKRLTIAVELVANPSIIFMDEPTSGLDARAAAIVMRTVRNTVDTGRTVVCTIHQPSIDIFESFDELLLMKRGGQVIYAGTLGHHSQKLVEYFEAIEGVPKIKDGYNPATWMLDVTTPSMESQMSVDFAQIFVNSSVNRRNQELIKELSTPPPGSNDLYFRTKYAQPFSTQTKACFWKMYWSNWRYPQYNAIRFLMTVVIGVLFGLLFWQTGTKIEKEQDLNNFFGAMYAAVLFLGATNAATVQPAVAIERTVFYREKAAGMYSAIPYAISQVAVEIMYNTIQTGVYTLILYSMIGYDWTVVKFFWFYYYMLTCFVYFTLYGMMLVALTPNYQIAGICLSFFLSFWNLFSGFLIPRPQIPIWWRWYYWASPVAWTLYGIITSQVGDRDSIVHITGVGDMSLKTLLKNGFGFDYDFLPVVAVVHIAWILIFLFAFAYGIKFLNFQRR.

Residues 1-24 (MLGRDEDLVRTMSGRGSLGSTSHR) are disordered. One can recognise an ABC transporter 1 domain in the interval 173–446 (LGLFHLLPSK…FEYMGFKCPE (274 aa)). Residue 206 to 213 (GPPSSGKT) coordinates ATP. The ABC transmembrane type-2 1 domain occupies 524–737 (DLFKACFDRE…GQTALVINEF (214 aa)). The next 6 helical transmembrane spans lie at 542 to 562 (FVYV…MTVY), 582 to 602 (LFFS…FTVM), 621 to 641 (FALP…VIWI), 661 to 681 (LLAY…LGAL), 687 to 707 (IANS…GFII), and 773 to 793 (FWIC…CYII). An ABC transporter 2 domain is found at 852-1105 (LAFNNVNYYV…LVEYFEAIEG (254 aa)). 897 to 904 (GVSGAGKT) provides a ligand contact to ATP. The 215-residue stretch at 1177 to 1391 (TQTKACFWKM…TLYGIITSQV (215 aa)) folds into the ABC transmembrane type-2 2 domain. 7 consecutive transmembrane segments (helical) span residues 1196-1216 (YNAI…LLFW), 1230-1250 (NFFG…AATV), 1289-1309 (IQTG…WTVV), 1311-1331 (FFWF…YGMM), 1341-1361 (IAGI…GFLI), 1366-1386 (IPIW…LYGI), and 1422-1442 (FLPV…FAFA).

The protein belongs to the ABC transporter superfamily. ABCG family. PDR (TC 3.A.1.205) subfamily. In terms of tissue distribution, expressed in roots at low levels.

The protein resides in the membrane. Functionally, may be a general defense protein. The chain is ABC transporter G family member 34 (ABCG34) from Arabidopsis thaliana (Mouse-ear cress).